The primary structure comprises 237 residues: Probable transcriptional regulatory protein Bpro_2928 (237 aa).

The protein belongs to the TACO1 family.

It is found in the cytoplasm. This is Probable transcriptional regulatory protein Bpro_2928 from Polaromonas sp. (strain JS666 / ATCC BAA-500).